Reading from the N-terminus, the 302-residue chain is UDP-N-acetylenolpyruvoylglucosamine reductase (302 aa).

Residues 31–210 (IGGQTKVYFR…ENEVLELKKK (180 aa)) enclose the FAD-binding PCMH-type domain. The active site involves Arg-175. Residue Ser-224 is the Proton donor of the active site. Glu-297 is a catalytic residue.

This sequence belongs to the MurB family. FAD is required as a cofactor.

The protein localises to the cytoplasm. It carries out the reaction UDP-N-acetyl-alpha-D-muramate + NADP(+) = UDP-N-acetyl-3-O-(1-carboxyvinyl)-alpha-D-glucosamine + NADPH + H(+). It functions in the pathway cell wall biogenesis; peptidoglycan biosynthesis. Functionally, cell wall formation. The polypeptide is UDP-N-acetylenolpyruvoylglucosamine reductase (Pelagibacter ubique (strain HTCC1062)).